We begin with the raw amino-acid sequence, 405 residues long: L-carnitine CoA-transferase (405 aa).

CoA contacts are provided by Lys97 and Arg104. Residue Asp169 is the Nucleophile of the active site.

The protein belongs to the CoA-transferase III family. CaiB subfamily. In terms of assembly, homodimer.

It localises to the cytoplasm. It catalyses the reaction crotonobetainyl-CoA + (R)-carnitine = crotonobetaine + (R)-carnitinyl-CoA. The catalysed reaction is 4-(trimethylamino)butanoyl-CoA + (R)-carnitine = (R)-carnitinyl-CoA + 4-(trimethylamino)butanoate. It functions in the pathway amine and polyamine metabolism; carnitine metabolism. Its function is as follows. Catalyzes the reversible transfer of the CoA moiety from gamma-butyrobetainyl-CoA to L-carnitine to generate L-carnitinyl-CoA and gamma-butyrobetaine. Is also able to catalyze the reversible transfer of the CoA moiety from gamma-butyrobetainyl-CoA or L-carnitinyl-CoA to crotonobetaine to generate crotonobetainyl-CoA. This is L-carnitine CoA-transferase from Escherichia coli (strain K12 / MC4100 / BW2952).